Here is a 346-residue protein sequence, read N- to C-terminus: Nitrilase 3 (346 aa).

Residue serine 2 is modified to N-acetylserine. Residues 25–297 (VRVTIVQSST…EGLVTADLDL (273 aa)) enclose the CN hydrolase domain. The active-site Proton acceptor is the glutamate 65. Lysine 152 functions as the Proton donor in the catalytic mechanism. Cysteine 186 functions as the Nucleophile in the catalytic mechanism.

This sequence belongs to the carbon-nitrogen hydrolase superfamily. Nitrilase family.

The protein resides in the cell membrane. It catalyses the reaction a nitrile + 2 H2O = a carboxylate + NH4(+). Its function is as follows. Can convert indole-3-acetonitrile to the plant hormone indole-3-acetic acid. In Arabidopsis thaliana (Mouse-ear cress), this protein is Nitrilase 3 (NIT3).